The chain runs to 424 residues: UDP-N-acetylglucosamine 1-carboxyvinyltransferase 3 (424 aa).

22 to 23 (KN) serves as a coordination point for phosphoenolpyruvate. Arg-94 contributes to the UDP-N-acetyl-alpha-D-glucosamine binding site. Residue Asp-118 is the Proton donor of the active site. Residues 123–127 (RPVDQ), Asp-306, and Leu-328 each bind UDP-N-acetyl-alpha-D-glucosamine.

Belongs to the EPSP synthase family. MurA subfamily.

It localises to the cytoplasm. It catalyses the reaction phosphoenolpyruvate + UDP-N-acetyl-alpha-D-glucosamine = UDP-N-acetyl-3-O-(1-carboxyvinyl)-alpha-D-glucosamine + phosphate. The protein operates within cell wall biogenesis; peptidoglycan biosynthesis. In terms of biological role, cell wall formation. Adds enolpyruvyl to UDP-N-acetylglucosamine. The sequence is that of UDP-N-acetylglucosamine 1-carboxyvinyltransferase 3 from Symbiobacterium thermophilum (strain DSM 24528 / JCM 14929 / IAM 14863 / T).